Here is a 206-residue protein sequence, read N- to C-terminus: Ribonuclease HII (206 aa).

One can recognise an RNase H type-2 domain in the interval 18–206 (GRVAGVDEVG…PVREWLEANS (189 aa)). Residues Asp-24, Glu-25, and Asp-116 each contribute to the a divalent metal cation site.

The protein belongs to the RNase HII family. Mn(2+) is required as a cofactor. Mg(2+) serves as cofactor.

It is found in the cytoplasm. The catalysed reaction is Endonucleolytic cleavage to 5'-phosphomonoester.. In terms of biological role, endonuclease that specifically degrades the RNA of RNA-DNA hybrids. The sequence is that of Ribonuclease HII from Shewanella amazonensis (strain ATCC BAA-1098 / SB2B).